The chain runs to 333 residues: Adenosine deaminase (333 aa).

Residues H12 and H14 each coordinate Zn(2+). The substrate site is built by H14, D16, and G170. H197 serves as a coordination point for Zn(2+). E200 serves as the catalytic Proton donor. D278 contributes to the Zn(2+) binding site. Residue D279 coordinates substrate.

This sequence belongs to the metallo-dependent hydrolases superfamily. Adenosine and AMP deaminases family. Adenosine deaminase subfamily. The cofactor is Zn(2+).

It catalyses the reaction adenosine + H2O + H(+) = inosine + NH4(+). The catalysed reaction is 2'-deoxyadenosine + H2O + H(+) = 2'-deoxyinosine + NH4(+). Functionally, catalyzes the hydrolytic deamination of adenosine and 2-deoxyadenosine. The sequence is that of Adenosine deaminase from Photorhabdus laumondii subsp. laumondii (strain DSM 15139 / CIP 105565 / TT01) (Photorhabdus luminescens subsp. laumondii).